The chain runs to 1473 residues: G8 domain-containing protein DDB_G0286311 (1473 aa).

The signal sequence occupies residues 1 to 21 (MKRFFIVILFILLVCIFNVKS). The helical transmembrane segment at 105-125 (IVLMIATITGSLLFIRFNIGF) threads the bilayer. N-linked (GlcNAc...) asparagine glycosylation occurs at asparagine 126. The chain crosses the membrane as a helical span at residues 130–150 (TLIILIIGTIFLIGSSHSITL). N-linked (GlcNAc...) asparagine glycans are attached at residues asparagine 203, asparagine 241, and asparagine 275. Residues 298–375 (TGTTPTTTPT…PTTTPTTTPT (78 aa)) are compositionally biased toward low complexity. Positions 298-400 (TGTTPTTTPT…SSSPSSPSFS (103 aa)) are disordered. Polar residues predominate over residues 376–389 (DSCPTTSTWRPTMA). Low complexity predominate over residues 390–400 (SSSSPSSPSFS). N-linked (GlcNAc...) asparagine glycosylation is found at asparagine 444, asparagine 637, asparagine 680, asparagine 1078, asparagine 1088, asparagine 1176, asparagine 1206, asparagine 1225, asparagine 1389, and asparagine 1424. The 129-residue stretch at 626 to 754 (SIWSSGIVPL…YHNTWSKLST (129 aa)) folds into the G8 domain.

It belongs to the comF family.

Its subcellular location is the membrane. In Dictyostelium discoideum (Social amoeba), this protein is G8 domain-containing protein DDB_G0286311.